A 156-amino-acid polypeptide reads, in one-letter code: Acyl carrier protein, mitochondrial (156 aa).

Residues 1–68 (MASRVLSAYV…GRVTQLCRQY (68 aa)) constitute a mitochondrion transit peptide. The Carrier domain occupies 77–152 (EGIQDRVLYV…EIVDYIADKK (76 aa)). Lysine 88 is modified (N6-acetyllysine). The residue at position 112 (serine 112) is an O-(pantetheine 4'-phosphoryl)serine.

It belongs to the acyl carrier protein (ACP) family. In terms of assembly, mammalian complex I is composed of 45 different subunits. Interacts with ETFRF1. Identified in a complex composed of MALSU1, MIEF1 upstream open reading frame protein and NDUFAB1; within the trimeric complex, MIEF1 upstream open reading frame protein functions as a bridging scaffold that interacts with MALSU1 on one side, and with NDUFAB1 on the other side. The complex interacts with the mitochondrial large ribosomal subunit. Interacts with alpha-1-microglobulin chain; this interaction is required for the maintenance of mitochondrial redox homeostasis. Component of the mitochondrial core iron-sulfur cluster (ISC) complex composed of NFS1, LYRM4, NDUFAB1, ISCU, FXN, and FDX2; this complex is a heterohexamer containing two copies of each monomer. Component of the cyteine desulfurase complex composed of NFS1, LYRM4 and NDUFAB1; this complex contributes to the stability and cysteine desulfurase activity of NFS1. In terms of processing, phosphopantetheinylation at Ser-112 is essential for interactions with LYR motif-containing proteins.

It localises to the mitochondrion. Carrier of the growing fatty acid chain in fatty acid biosynthesis. Accessory and non-catalytic subunit of the mitochondrial membrane respiratory chain NADH dehydrogenase (Complex I), which functions in the transfer of electrons from NADH to the respiratory chain. Accessory protein, of the core iron-sulfur cluster (ISC) assembly complex, that regulates, in association with LYRM4, the stability and the cysteine desulfurase activity of NFS1 and participates in the [2Fe-2S] clusters assembly on the scaffolding protein ISCU. The core iron-sulfur cluster (ISC) assembly complex is involved in the de novo synthesis of a [2Fe-2S] cluster, the first step of the mitochondrial iron-sulfur protein biogenesis. This process is initiated by the cysteine desulfurase complex (NFS1:LYRM4:NDUFAB1) that produces persulfide which is delivered on the scaffold protein ISCU in a FXN-dependent manner. Then this complex is stabilized by FDX2 which provides reducing equivalents to accomplish the [2Fe-2S] cluster assembly. Finally, the [2Fe-2S] cluster is transferred from ISCU to chaperone proteins, including HSCB, HSPA9 and GLRX5. The protein is Acyl carrier protein, mitochondrial of Pongo pygmaeus (Bornean orangutan).